The chain runs to 140 residues: Peptide methionine sulfoxide reductase MsrB (140 aa).

The region spanning 9 to 131 (DALWREKLTP…NSASIVLDSE (123 aa)) is the MsrB domain. Zn(2+) contacts are provided by C48, C51, C97, and C100. The active-site Nucleophile is C120.

It belongs to the MsrB Met sulfoxide reductase family. It depends on Zn(2+) as a cofactor.

The catalysed reaction is L-methionyl-[protein] + [thioredoxin]-disulfide + H2O = L-methionyl-(R)-S-oxide-[protein] + [thioredoxin]-dithiol. The protein is Peptide methionine sulfoxide reductase MsrB of Cellvibrio japonicus (strain Ueda107) (Pseudomonas fluorescens subsp. cellulosa).